A 489-amino-acid chain; its full sequence is Rhamnulokinase (489 aa).

Residue 13–17 participates in ATP binding; sequence ASSGR. C68 and C222 form a disulfide bridge. Residues G83 and 236–238 each bind substrate; that span reads HDT. Catalysis depends on D237, which acts as the Proton acceptor. T259 is a binding site for ATP. N296 serves as a coordination point for substrate. Q304 contacts ATP. The cysteines at positions 353 and 370 are disulfide-linked. G402 provides a ligand contact to ATP. A disulfide bridge connects residues C413 and C417.

It belongs to the rhamnulokinase family. Mg(2+) serves as cofactor.

It catalyses the reaction L-rhamnulose + ATP = L-rhamnulose 1-phosphate + ADP + H(+). Its pathway is carbohydrate degradation; L-rhamnose degradation; glycerone phosphate from L-rhamnose: step 2/3. In terms of biological role, involved in the catabolism of L-rhamnose (6-deoxy-L-mannose). Catalyzes the transfer of the gamma-phosphate group from ATP to the 1-hydroxyl group of L-rhamnulose to yield L-rhamnulose 1-phosphate. The polypeptide is Rhamnulokinase (Salmonella paratyphi A (strain AKU_12601)).